We begin with the raw amino-acid sequence, 234 residues long: Opacity protein opA65 (234 aa).

A1 is a signal peptide. A disordered region spans residues 154-179; sequence TVTPKPKNGTQGGPVKSTSPIPAYHE.

This sequence belongs to the opacity porin family.

It localises to the cell outer membrane. Its function is as follows. Implicated in a number of adherence functions. OPA proteins are implicated in pathogenesis and are subject to phase variation. This is Opacity protein opA65 from Neisseria gonorrhoeae.